The chain runs to 217 residues: Membrane-spanning 4-domains subfamily A member 6C (217 aa).

Residues 1–20 (MIPQVVTNETITTISPNGIN) are compositionally biased toward polar residues. Positions 1–33 (MIPQVVTNETITTISPNGINFPQKDESQPTQQR) are disordered. Topologically, residues 1–46 (MIPQVVTNETITTISPNGINFPQKDESQPTQQRQDSLKKHLKAEIK) are cytoplasmic. A helical membrane pass occupies residues 47–67 (VIVAIQIMCAVTVLALGIILA). Over 68-84 (SVPPVPYFNSVFSVLLK) the chain is Extracellular. A helical membrane pass occupies residues 85-105 (SGYPFIGALFFIASGILSIIT). At 106–121 (ERKSTKPLVDASLTLN) the chain is on the cytoplasmic side. The chain crosses the membrane as a helical span at residues 122-142 (ILSVSFAFVGIIIISVSLAGL). Residues 143–186 (HPASEQCKQSKELSLIEHDYYQPFYNSDRSECAVTKSILTGALS) are Extracellular-facing. A helical membrane pass occupies residues 187–207 (VMLIISVLELGLALLSAMLWL). The Cytoplasmic segment spans residues 208-217 (REGVLTSLRM).

The protein belongs to the MS4A family. Expressed only by thymus, spleen, peripheral lymph node and bone marrow.

Its subcellular location is the membrane. May be involved in signal transduction as a component of a multimeric receptor complex. The protein is Membrane-spanning 4-domains subfamily A member 6C (Ms4a6c) of Mus musculus (Mouse).